We begin with the raw amino-acid sequence, 798 residues long: Exo-1,4-beta-xylosidase xlnD (798 aa).

Positions 1 to 20 (MPGAASIVAVLAALLPTALG) are cleaved as a signal peptide. Residues Asn-23, Asn-87, Asn-142, and Asn-237 are each glycosylated (N-linked (GlcNAc...) asparagine). The active site involves Asp-310. N-linked (GlcNAc...) asparagine glycans are attached at residues Asn-326, Asn-391, Asn-404, Asn-443, Asn-480, Asn-522, Asn-618, Asn-645, Asn-658, Asn-685, and Asn-707.

This sequence belongs to the glycosyl hydrolase 3 family.

The protein resides in the secreted. The catalysed reaction is Hydrolysis of (1-&gt;4)-beta-D-xylans, to remove successive D-xylose residues from the non-reducing termini.. It functions in the pathway glycan degradation; xylan degradation. Its function is as follows. Xylan 1,4-beta-xylosidase involved in the hydrolysis of xylan, a major structural heterogeneous polysaccharide found in plant biomass representing the second most abundant polysaccharide in the biosphere, after cellulose. The polypeptide is Exo-1,4-beta-xylosidase xlnD (xlnD) (Aspergillus oryzae (strain ATCC 42149 / RIB 40) (Yellow koji mold)).